We begin with the raw amino-acid sequence, 279 residues long: MKLLEKMIYVEFLMIIMAMWVVPMSYGHGAMIGNAVEAPDVAEAPGINDPSKALDPNWYDARATFYGDIHGGDTQQGACGYGNLFRQGYGLATAALSTALFNDGYTCGACYEIMCTRDPQWCLPGSVKITATNFCPANYSKTTDLWCNPPQKHFDLSLAMFLKIAKYKAGVVPVRYRRIPCSKTGGVKFETKGNPYFLMVLIYNVGGAGDIKYVQVKENKTGWITMKKNWGQNWTTSTVLTGQGLSFRVTTTDGITKDFWNVMPKNWGFGQTFDGKINF.

The first 27 residues, 1–27 (MKLLEKMIYVEFLMIIMAMWVVPMSYG), serve as a signal peptide directing secretion. The region spanning 76–186 (QGACGYGNLF…RRIPCSKTGG (111 aa)) is the Expansin-like EG45 domain. The Expansin-like CBD domain maps to 196 to 275 (YFLMVLIYNV…NWGFGQTFDG (80 aa)).

This sequence belongs to the expansin family. Expansin A subfamily.

The protein localises to the secreted. Its subcellular location is the cell wall. The protein resides in the membrane. Causes loosening and extension of plant cell walls by disrupting non-covalent bonding between cellulose microfibrils and matrix glucans. No enzymatic activity has been found. This is Putative expansin-A26 (EXPA26) from Arabidopsis thaliana (Mouse-ear cress).